The primary structure comprises 297 residues: 2-dehydropantoate 2-reductase (297 aa).

NADP(+)-binding positions include 11-16, N107, and A133; that span reads GAGAMG. N107 contacts substrate. K187 serves as the catalytic Proton donor. The substrate site is built by N191, N195, N205, and S251. E263 contacts NADP(+).

Belongs to the ketopantoate reductase family.

It localises to the cytoplasm. It carries out the reaction (R)-pantoate + NADP(+) = 2-dehydropantoate + NADPH + H(+). It participates in cofactor biosynthesis; (R)-pantothenate biosynthesis; (R)-pantoate from 3-methyl-2-oxobutanoate: step 2/2. Its function is as follows. Catalyzes the NADPH-dependent reduction of ketopantoate into pantoic acid. The protein is 2-dehydropantoate 2-reductase of Listeria monocytogenes serovar 1/2a (strain ATCC BAA-679 / EGD-e).